Reading from the N-terminus, the 763-residue chain is Phosphoglycerol transferase I (763 aa).

4 helical membrane passes run 1–21 (MSELLSFALFLASVLIYAWKA), 26–46 (WWFAATLTVLGLFVVLNITLF), 77–97 (ILPGIGIVLGLTAVFGALGWI), and 108–128 (FGYSLLALLLALGSVDASPAF).

It belongs to the OpgB family.

It localises to the cell inner membrane. The enzyme catalyses a phosphatidylglycerol + a membrane-derived-oligosaccharide D-glucose = a 1,2-diacyl-sn-glycerol + a membrane-derived-oligosaccharide 6-(glycerophospho)-D-glucose.. It participates in glycan metabolism; osmoregulated periplasmic glucan (OPG) biosynthesis. Functionally, transfers a phosphoglycerol residue from phosphatidylglycerol to the membrane-bound nascent glucan backbones. The chain is Phosphoglycerol transferase I from Escherichia coli O45:K1 (strain S88 / ExPEC).